A 331-amino-acid polypeptide reads, in one-letter code: D-lactate dehydrogenase (331 aa).

NAD(+) contacts are provided by residues 155–156 (HI), aspartate 175, 206–207 (VP), asparagine 212, 233–235 (AAR), and aspartate 259. Arginine 235 is a catalytic residue. Glutamate 264 is a catalytic residue. Catalysis depends on histidine 296, which acts as the Proton donor.

The protein belongs to the D-isomer specific 2-hydroxyacid dehydrogenase family. Homodimer.

The catalysed reaction is (R)-lactate + NAD(+) = pyruvate + NADH + H(+). In Leuconostoc mesenteroides subsp. cremoris, this protein is D-lactate dehydrogenase.